The following is a 146-amino-acid chain: uncharacterized protein (146 aa).

A signal peptide spans 1 to 24; sequence MVIYYGKKNCTLLLLLFILCNIYS. N-linked (GlcNAc...) asparagine glycosylation is found at asparagine 99 and asparagine 106.

This is an uncharacterized protein from Saccharomyces cerevisiae (strain ATCC 204508 / S288c) (Baker's yeast).